Reading from the N-terminus, the 187-residue chain is Elongation factor P (187 aa).

The protein belongs to the elongation factor P family.

It localises to the cytoplasm. Its pathway is protein biosynthesis; polypeptide chain elongation. In terms of biological role, involved in peptide bond synthesis. Stimulates efficient translation and peptide-bond synthesis on native or reconstituted 70S ribosomes in vitro. Probably functions indirectly by altering the affinity of the ribosome for aminoacyl-tRNA, thus increasing their reactivity as acceptors for peptidyl transferase. The sequence is that of Elongation factor P from Zymomonas mobilis subsp. mobilis (strain ATCC 31821 / ZM4 / CP4).